The sequence spans 246 residues: Aquaporin AqpM (246 aa).

At 1–11 the chain is on the cytoplasmic side; it reads MVSLTKRCIAE. The chain crosses the membrane as a helical span at residues 12–32; it reads FIGTFFLVFFGAGAAAITLMI. The Extracellular segment spans residues 33–45; it reads ASGGTAPNPFNIG. Residues 46-66 form a helical membrane-spanning segment; sequence IGLLGGLGDWVAIGLAFGFAI. The Cytoplasmic portion of the chain corresponds to 67 to 69; that stretch reads AAS. Residues 70-90 form a helical membrane-spanning segment; sequence IYALGNISGCHINPAVTIGLW. An NPA 1 motif is present at residues 82–84; that stretch reads NPA. Over 91–103 the chain is Extracellular; that stretch reads SVKKFPGRDVVPY. Residues 104 to 124 traverse the membrane as a helical segment; it reads IIAQLLGAAFASFIFLQCAGI. Residues 125 to 145 lie on the Cytoplasmic side of the membrane; the sequence is TAATIGGLGATAPFPGIGYWQ. Residues 146 to 166 form a helical membrane-spanning segment; the sequence is AMLAETVGTFLLMITIMGIAV. Residues 167–172 lie on the Extracellular side of the membrane; it reads DERAPK. A helical membrane pass occupies residues 173–193; the sequence is GFAGIIIGLTVAGIITTIGNI. Residues 194 to 217 are Cytoplasmic-facing; the sequence is TGSSLNPARTFGPYLNDMVFAGTN. The short motif at 199 to 201 is the NPA 2 element; sequence NPA. A helical membrane pass occupies residues 218–238; sequence LWNYFPIYVIGPVVGAVLAAL. Residues 239–246 are Extracellular-facing; sequence TYQYLTSE.

This sequence belongs to the MIP/aquaporin (TC 1.A.8) family. In terms of assembly, homotetramer.

The protein localises to the cell membrane. Channel that permits osmotically driven movement of water in both directions. It mediates rapid entry or exit of water in response to abrupt changes in osmolarity. Also exhibits a transient but reproducible increase in the initial glycerol flux. This Methanothermobacter thermautotrophicus (strain ATCC 29096 / DSM 1053 / JCM 10044 / NBRC 100330 / Delta H) (Methanobacterium thermoautotrophicum) protein is Aquaporin AqpM (aqpM).